A 366-amino-acid polypeptide reads, in one-letter code: Probable cyclin-dependent kinase 10 (366 aa).

The Protein kinase domain occupies 7–293 (FEKLDSIGEG…ASDAIKHPFF (287 aa)). Residues 13–21 (IGEGTYGIV) and Lys36 each bind ATP. Asp132 acts as the Proton acceptor in catalysis. Low complexity predominate over residues 315–358 (FKNQNKKQNNNFNNFVQNNQTNQNNQTNQNNQTNQNNKTSQNNN). Positions 315-366 (FKNQNKKQNNNFNNFVQNNQTNQNNQTNQNNQTNQNNKTSQNNNMDSYKYSK) are disordered.

It belongs to the protein kinase superfamily. CMGC Ser/Thr protein kinase family. CDC2/CDKX subfamily.

The enzyme catalyses L-seryl-[protein] + ATP = O-phospho-L-seryl-[protein] + ADP + H(+). It carries out the reaction L-threonyl-[protein] + ATP = O-phospho-L-threonyl-[protein] + ADP + H(+). This Dictyostelium discoideum (Social amoeba) protein is Probable cyclin-dependent kinase 10 (cdk10).